We begin with the raw amino-acid sequence, 118 residues long: UPF0344 protein YisL (118 aa).

Transmembrane regions (helical) follow at residues 4-24 (LHITTWVVALILLFVSYSLYS), 33-53 (ITHMILRLFYILIILTGAELF), 62-82 (EYAGKMILGIITIGLMEMLLI), and 93-113 (LWVGFVIVLLLTVLLGLHLPI).

This sequence belongs to the UPF0344 family.

The protein localises to the cell membrane. This Bacillus subtilis (strain 168) protein is UPF0344 protein YisL (yisL).